The chain runs to 301 residues: MLALRVARGSWGALRGAAWAPGTRPSKRRACWALLPPVPCCLGCLAERWRLRPAALGLRLPGIGQRNHCSGAGKAAPRPAAGAGAAAEAPGGQWGPASTPSLYENPWTIPNMLSMTRIGLAPVLGYLIIEEDFNIALGVFALAGLTDLLDGFIARNWANQRSALGSALDPLADKILISILYVSLTYADLIPVPLTYMIISRDVMLIAAVFYVRYRTLPTPRTLAKYFNPCYATARLKPTFISKVNTAVQLILVAASLAAPVFNYADSIYLQILWCFTAFTTAASAYSYYHYGRKTVQVIKD.

The interval Ser70 to Gln93 is disordered. Positions Gly71–Gln93 are enriched in low complexity. Transmembrane regions (helical) follow at residues Ile109–Ile129, Phe133–Ile153, Ile190–Val212, Leu250–Leu270, and Ile272–Gly292.

The protein belongs to the CDP-alcohol phosphatidyltransferase class-I family. A divalent metal cation is required as a cofactor. Highly expressed in tissues such as heart, skeletal muscle and liver.

The protein localises to the mitochondrion inner membrane. It carries out the reaction a CDP-1,2-diacyl-sn-glycerol + a 1,2-diacyl-sn-glycero-3-phospho-(1'-sn-glycerol) = a cardiolipin + CMP + H(+). Functionally, catalyzes the synthesis of cardiolipin (CL) (diphosphatidylglycerol) by specifically transferring a phosphatidyl group from CDP-diacylglycerol to phosphatidylglycerol (PG). CL is a key phospholipid in mitochondrial membranes and plays important roles in maintaining the functional integrity and dynamics of mitochondria under both optimal and stress conditions. This Homo sapiens (Human) protein is Cardiolipin synthase (CMP-forming) (CRLS1).